The chain runs to 642 residues: MDNREALKTFMTGENFYLQHYLGAHREELNGEHGYTFRVWAPNAQAVHLVGDFTNWIENQIPMVRNDFGVWEVFTNMAQEGHIYKYHVTRQNGHQLMKIDPFAVRYEARPGTGAIVTELPEKKWKDGLWLARRKRWGFAERPVNIYEVHAGSWKRNPDGSPYSFAQLKDELIPYLVEMNYTHIEFMPLMSHPLGLSWGYQLMGYFALEHAYGRPEEFQDFVEECHTHNIGVIVDWVPGHFTINDDALAYYDGTPTFEYQDHNKAHNHGWGALNFDLGKNEVQSFLISCIKHWIDVYHLDGIRVDAVSNMLYLDYDDAPWTPNKDGGNLNYEGYYFLQRLNEVIKLEYPDVMMIAEESSSATKITGMKEIGGLGFDYKWNMGWMNDILRFYEEDPIYRKYDFNLVTFSFMYVFKENYLLPFSHDEVVHGKKSMMHKMWGDRYNQFAGLRNLYTYQICHPGKKLLFMGSEYGQFLEWKSEEQLEWSNLEDPMNAKMKYFTSQLNQFYKDHRCLWEIDTSYDGIEIIDADNRDQSVLSFIRKGKKGEMLVCIFNMVPVERKDFTIGLPVAGIYEEVWNTELEEWGGVWKEHNQTVQTQEGLWKDYEQTLTFTLPAMGASVWKIKRRLKSTKTVTNKNPKGVENEK.

The Nucleophile role is filled by aspartate 304. The active-site Proton donor is the glutamate 355.

The protein belongs to the glycosyl hydrolase 13 family. GlgB subfamily. In terms of assembly, monomer.

It carries out the reaction Transfers a segment of a (1-&gt;4)-alpha-D-glucan chain to a primary hydroxy group in a similar glucan chain.. The protein operates within glycan biosynthesis; glycogen biosynthesis. Functionally, catalyzes the formation of the alpha-1,6-glucosidic linkages in glycogen by scission of a 1,4-alpha-linked oligosaccharide from growing alpha-1,4-glucan chains and the subsequent attachment of the oligosaccharide to the alpha-1,6 position. In Streptococcus pneumoniae serotype 2 (strain D39 / NCTC 7466), this protein is 1,4-alpha-glucan branching enzyme GlgB.